The chain runs to 616 residues: Adenylosuccinate synthetase 1 (616 aa).

The disordered stretch occupies residues 1–27 (MDKQAERGQSAGPVKTPQGTQPPAHNY). Positions 17 to 27 (PQGTQPPAHNY) are enriched in polar residues. GTP is bound by residues 87-93 (GDEGKGK) and 117-119 (GHT). Residue D88 is the Proton acceptor of the active site. D88 and G117 together coordinate Mg(2+). IMP-binding positions include 88–91 (DEGK), 115–118 (NAGH), T202, K216, Q328, T343, and K472. The active-site Proton donor is the H118. 468-474 (AVTKKPR) is a substrate binding site. GTP is bound by residues R474 and 603 to 605 (GNG).

This sequence belongs to the adenylosuccinate synthetase family. Homodimer. The cofactor is Mg(2+).

Its subcellular location is the cytoplasm. The enzyme catalyses IMP + L-aspartate + GTP = N(6)-(1,2-dicarboxyethyl)-AMP + GDP + phosphate + 2 H(+). Its pathway is purine metabolism; AMP biosynthesis via de novo pathway; AMP from IMP: step 1/2. Plays an important role in the salvage pathway for purine nucleotide biosynthesis. Catalyzes the first committed step in the biosynthesis of AMP from IMP. This is Adenylosuccinate synthetase 1 from Trypanosoma cruzi (strain CL Brener).